We begin with the raw amino-acid sequence, 91 residues long: MELKILEKSDDEMKMEIAGESHTLLNMLKIILLEDERVHTASYDMKHVTISEPVLFIKTENADPIDVVKAAVAKLITECEEFVTVFNKAVE.

It belongs to the archaeal Rpo11/eukaryotic RPB11/RPC19 RNA polymerase subunit family. In terms of assembly, part of the RNA polymerase complex.

Its subcellular location is the cytoplasm. It catalyses the reaction RNA(n) + a ribonucleoside 5'-triphosphate = RNA(n+1) + diphosphate. Functionally, DNA-dependent RNA polymerase (RNAP) catalyzes the transcription of DNA into RNA using the four ribonucleoside triphosphates as substrates. This Methanococcoides burtonii (strain DSM 6242 / NBRC 107633 / OCM 468 / ACE-M) protein is DNA-directed RNA polymerase subunit Rpo11.